The following is a 333-amino-acid chain: Homoserine O-succinyltransferase (333 aa).

Catalysis depends on Cys-147, which acts as the Acyl-thioester intermediate. Substrate is bound by residues Lys-168 and Ser-196. His-239 serves as the catalytic Proton acceptor. Glu-241 is an active-site residue. Arg-253 contributes to the substrate binding site.

It belongs to the MetA family.

The protein resides in the cytoplasm. It catalyses the reaction L-homoserine + succinyl-CoA = O-succinyl-L-homoserine + CoA. It participates in amino-acid biosynthesis; L-methionine biosynthesis via de novo pathway; O-succinyl-L-homoserine from L-homoserine: step 1/1. Functionally, transfers a succinyl group from succinyl-CoA to L-homoserine, forming succinyl-L-homoserine. The chain is Homoserine O-succinyltransferase from Rhodopseudomonas palustris.